Reading from the N-terminus, the 357-residue chain is MSDKTPRKPTAFRLEQPARVSAASEQEEPRRPRAVKDLEQITPQADVFDLTDDEAAELEILDPAFEAPERKGWSLSRILFGALGILVSFAIGIWTEDLIRALFARADWLGWTALGVAMVALAAFAAIILRELVALRRLASVQHLRKDAADAAERDDMAAARKAVDALRTIAAGIPETAKGRQLLDSLTDDIIDGRDLIRLAETEILRPLDREARTLVLNASKRVSIVTAISPRALVDIGYVIFESTRLIRRLSQLYGGRPGTLGFIKFARRVIAHLAVTGTIAMGDSVIQQLVGHGLASRLSAKLGEGVVNGLMTARIGIAAMDVVRPFPFNAEKRPGIGDFIGDLARLNSDRNARK.

The tract at residues 1–36 is disordered; the sequence is MSDKTPRKPTAFRLEQPARVSAASEQEEPRRPRAVK. Positions 27-36 are enriched in basic and acidic residues; the sequence is EEPRRPRAVK. 2 helical membrane passes run 78-98 and 109-129; these read ILFGALGILVSFAIGIWTEDL and LGWTALGVAMVALAAFAAIIL.

The protein belongs to the UPF0283 family.

It is found in the cell inner membrane. The protein is UPF0283 membrane protein BAbS19_I09770 of Brucella abortus (strain S19).